Here is a 619-residue protein sequence, read N- to C-terminus: Adagio protein 3 (619 aa).

Residues 44–123 (VGMFYYPMTP…SEIRRCLEEG (80 aa)) enclose the PAS domain. Residue cysteine 91 is modified to S-4a-FMN cysteine. The PAC domain occupies 127–168 (QGELLNFRKDGTPLVNRLRLAPIRDDDGTITHVIGIQVFSET). In terms of domain architecture, F-box spans 211-257 (ILQLSDEVLAHNILSRLTPRDVASIGSACRRLRQLTKNESVRKMVCQ). Kelch repeat units lie at residues 304 to 354 (SRCN…TSSP), 357 to 404 (RWGH…AGGT), 409 to 457 (RSWH…PTSW), 462 to 513 (RLGH…ECSA), and 523 to 571 (RLDH…NVPG).

It belongs to the ADAGIO family. In terms of assembly, interacts with ADO1 (via Kelch repeats), ADO2 (via Kelch repeats), SKP1A/ASK1, SKP1B/ASK2, ASK3, SKP1K/ASK11, ASK12, ASK13 and SKP1N/ASK14. Interacts (via Kelch repeats) with CDF1, CDF2 and CDF3. Interacts (via N-terminus) with CO and GI (via N-terminus) in a blue-light-dependent manner. In terms of processing, FMN binds covalently to cysteine after exposure to blue light and is reversed in the dark. Highly expressed in stomata and leaves and to a lower extent in seeds, roots, rosettes, stems and siliques. Also present in sepals and anther filaments.

Its subcellular location is the nucleus. The protein localises to the cytoplasm. It functions in the pathway protein modification; protein ubiquitination. Component of an E3 ubiquitin ligase complex that plays a central role in blue light-dependent circadian cycles. Acts as a blue light photoreceptor, due to the presence of FMN, that mediates light-regulated protein degradation of critical clock components by targeting them to the proteasome complex. The SCF(ADO3) E3 ubiquitin ligase complex is involved in the regulation of circadian clock-dependent processes including transition to flowering time, hypocotyl elongation, cotyledons and leaf movement rhythms. Forms a complex with 'GIGANTEA' (GI) to regulate 'CONSTANS' (CO) expression. Promotes CO expression during the light period of long days by decreasing the stability of CDF1 and CDF2 and by interacting directly with the CO protein and stabilizing it. ADO3 function is mainly GI dependent. Does not act as a regulator of CDF1 transcription. The interactions of ADO1/ZTL and ADO2 with ADO3 prevent its interaction with CDF1. The protein is Adagio protein 3 (ADO3) of Arabidopsis thaliana (Mouse-ear cress).